Here is a 128-residue protein sequence, read N- to C-terminus: uncharacterized protein (128 aa).

This is an uncharacterized protein from Borreliella burgdorferi (strain ATCC 35210 / DSM 4680 / CIP 102532 / B31) (Borrelia burgdorferi).